The chain runs to 101 residues: Putative pterin-4-alpha-carbinolamine dehydratase (101 aa).

Belongs to the pterin-4-alpha-carbinolamine dehydratase family.

It catalyses the reaction (4aS,6R)-4a-hydroxy-L-erythro-5,6,7,8-tetrahydrobiopterin = (6R)-L-erythro-6,7-dihydrobiopterin + H2O. The sequence is that of Putative pterin-4-alpha-carbinolamine dehydratase from Nitrobacter hamburgensis (strain DSM 10229 / NCIMB 13809 / X14).